A 65-amino-acid polypeptide reads, in one-letter code: Large ribosomal subunit protein bL35 (65 aa).

Belongs to the bacterial ribosomal protein bL35 family.

The protein is Large ribosomal subunit protein bL35 of Blochmanniella pennsylvanica (strain BPEN).